The primary structure comprises 389 residues: MSSSIPRVYSLGNSAMTYLLALRIAQLPSQPKVPSVVLLLNDQKKLNRFLNNDSKIIVKSSNNNKETYHRQFMASCVPPILSNGEIAPIENLIVSDPSSKFITAQLSKYNKSLRPETNILFLNPSLNLLEHLHRYRWRFDEARPNLFMGFTTPVDVGTIHQEFQLSLKVKGRIQFHIAKIDGFPRMSSTGKSASLSLRGDRQKNEKENNAFYKLFREISRLRSGIGSDLVSFDLHVHGFQDLFFTELEKLILESCTEPLLAVYDCVYKKELLKIPGAQDIIKKLISEQLSIIDRSYPSLNTNPNYSVIFDKERIFSLVMRDLEVNGHKRAKLAQSLNQLNQTNINELNGFFVSLGKYKKCNCKWNDILLTLIKGKQFITKQKALDYHYL.

Its subcellular location is the mitochondrion. Its function is as follows. Translational activator of cytochrome b. The cytochrome b (coB) leader RNA may represent the target sequence for CBS1 and/ or CBS2. The polypeptide is Cytochrome B translational activator CBS2 (CBS2) (Saccharomyces cerevisiae (strain ATCC 204508 / S288c) (Baker's yeast)).